The primary structure comprises 22 residues: Chitin-binding protein 3 (22 aa).

In terms of processing, glycosylated; contains 2.5% carbohydrates.

In terms of biological role, chitin-binding protein. Has antifungal activity against F.solani, F.oxysporum, C.musae and C.gloesporoides but not against P.oligandrum. Depending on concentration the antifungal activity can be fungistatic or fungicidal. Inhibits both spore germination and mycelial growth in F.solani at a concentration of 0.1 mg/ml. Has antifungal activity against C.krusei, C.albicans, C.tropicalis and C.parapsilosis. Has no chitinase, beta-glucanase or hemagglutinating activity. Acts as a flocculent. This Moringa oleifera (Horseradish tree) protein is Chitin-binding protein 3.